A 213-amino-acid chain; its full sequence is Pyrrolidone-carboxylate peptidase (213 aa).

Residues Glu-80, Cys-143, and His-166 contribute to the active site.

The protein belongs to the peptidase C15 family. Homotetramer.

Its subcellular location is the cytoplasm. The enzyme catalyses Release of an N-terminal pyroglutamyl group from a polypeptide, the second amino acid generally not being Pro.. Its function is as follows. Removes 5-oxoproline from various penultimate amino acid residues except L-proline. The sequence is that of Pyrrolidone-carboxylate peptidase from Clavibacter michiganensis subsp. michiganensis (strain NCPPB 382).